The sequence spans 287 residues: Energy-coupling factor transporter ATP-binding protein EcfA2 (287 aa).

The ABC transporter domain occupies 3–245 (IKFENVSYVY…SEWLQKHHLA (243 aa)). 40–47 (GHTGSGKS) contributes to the ATP binding site.

This sequence belongs to the ABC transporter superfamily. Energy-coupling factor EcfA family. As to quaternary structure, forms a stable energy-coupling factor (ECF) transporter complex composed of 2 membrane-embedded substrate-binding proteins (S component), 2 ATP-binding proteins (A component) and 2 transmembrane proteins (T component).

The protein resides in the cell membrane. In terms of biological role, ATP-binding (A) component of a common energy-coupling factor (ECF) ABC-transporter complex. Unlike classic ABC transporters this ECF transporter provides the energy necessary to transport a number of different substrates. This Lactobacillus delbrueckii subsp. bulgaricus (strain ATCC 11842 / DSM 20081 / BCRC 10696 / JCM 1002 / NBRC 13953 / NCIMB 11778 / NCTC 12712 / WDCM 00102 / Lb 14) protein is Energy-coupling factor transporter ATP-binding protein EcfA2.